The primary structure comprises 385 residues: MVRFISFTSPIAALLLLSFGVKHASTASTNTCIVANSDSDDAITIAEAFEKCKTGGTVVFPKDSSYQLNSIVTTSDLKNVNINFAGTIHLPAREESYRNGDYYIQIKGTHIKMYGGGTINGHGQAWYDALDHTAPSVLRIAANDSIIGGFTIINSPRAHLNVTNSTNLVLHDFTLHTVSNNSYLPKNTDALDLYHSSGITFRDSMLTIGDDCVAIKEDVEKVIVSNVTCRGGHGYSIGSLGIGGRKDYVKHVNFRNSTCIDCENGVRVKTWAGGKGIVEDINYNDIILQNVDNPILVTTHYCDPNVIEYCNGNDDNSLNISSIHFKDITGTASALGNPIVNVNCSIESPCSDITFSGIDITKASNTTDNVCVYLEGSDEVSECSS.

A signal peptide spans 1-26 (MVRFISFTSPIAALLLLSFGVKHAST). Residues asparagine 143, asparagine 161, asparagine 164, and asparagine 180 are each glycosylated (N-linked (GlcNAc...) asparagine). PbH1 repeat units follow at residues 165 to 195 (STNL…DLYH), 196 to 217 (SSGI…AIKE), 219 to 241 (VEKV…GSLG), and 249 to 270 (VKHV…RVKT). Aspartate 210 acts as the Proton donor in catalysis. Cysteine 212 and cysteine 229 are joined by a disulfide. Asparagine 226 carries N-linked (GlcNAc...) asparagine glycosylation. The active site involves histidine 233. Asparagine 256, asparagine 319, and asparagine 343 each carry an N-linked (GlcNAc...) asparagine glycan. Cysteine 344 and cysteine 350 are disulfide-bonded. Residues 350-376 (CSDITFSGIDITKASNTTDNVCVYLEG) form a PbH1 5 repeat. The N-linked (GlcNAc...) asparagine glycan is linked to asparagine 365.

Belongs to the glycosyl hydrolase 28 family. Post-translationally, N-glycosylated.

The protein resides in the secreted. The enzyme catalyses [(1-&gt;4)-alpha-D-galacturonosyl](n) + H2O = alpha-D-galacturonate + [(1-&gt;4)-alpha-D-galacturonosyl](n-1). Specific in hydrolyzing the terminal glycosidic bond of polygalacturonic acid and oligogalacturonates. The polypeptide is Exopolygalacturonase rpg15 (Rhizopus delemar (strain RA 99-880 / ATCC MYA-4621 / FGSC 9543 / NRRL 43880) (Mucormycosis agent)).